The sequence spans 513 residues: Histidine ammonia-lyase (513 aa).

The 5-imidazolinone (Ala-Gly) cross-link spans 143–145 (ASG). Serine 144 bears the 2,3-didehydroalanine (Ser) mark.

It belongs to the PAL/histidase family. Contains an active site 4-methylidene-imidazol-5-one (MIO), which is formed autocatalytically by cyclization and dehydration of residues Ala-Ser-Gly.

It is found in the cytoplasm. It catalyses the reaction L-histidine = trans-urocanate + NH4(+). It functions in the pathway amino-acid degradation; L-histidine degradation into L-glutamate; N-formimidoyl-L-glutamate from L-histidine: step 1/3. The protein is Histidine ammonia-lyase of Xanthomonas campestris pv. campestris (strain B100).